The following is a 196-amino-acid chain: Holliday junction branch migration complex subunit RuvA (196 aa).

Residues 1–63 are domain I; the sequence is MYDYIKGKLS…DDAHLLFGFH (63 aa). Residues 64–142 are domain II; that stretch reads TENEKEIFLN…EASGESATSR (79 aa). The flexible linker stretch occupies residues 143–148; that stretch reads KVSSEQ. The tract at residues 148 to 196 is domain III; that stretch reads QNSNLEEAMEALLALGYKATELKKVKAFFEGTNETVEQYIKSSLKMLMK.

Belongs to the RuvA family. Homotetramer. Forms an RuvA(8)-RuvB(12)-Holliday junction (HJ) complex. HJ DNA is sandwiched between 2 RuvA tetramers; dsDNA enters through RuvA and exits via RuvB. An RuvB hexamer assembles on each DNA strand where it exits the tetramer. Each RuvB hexamer is contacted by two RuvA subunits (via domain III) on 2 adjacent RuvB subunits; this complex drives branch migration. In the full resolvosome a probable DNA-RuvA(4)-RuvB(12)-RuvC(2) complex forms which resolves the HJ.

It localises to the cytoplasm. The RuvA-RuvB-RuvC complex processes Holliday junction (HJ) DNA during genetic recombination and DNA repair, while the RuvA-RuvB complex plays an important role in the rescue of blocked DNA replication forks via replication fork reversal (RFR). RuvA specifically binds to HJ cruciform DNA, conferring on it an open structure. The RuvB hexamer acts as an ATP-dependent pump, pulling dsDNA into and through the RuvAB complex. HJ branch migration allows RuvC to scan DNA until it finds its consensus sequence, where it cleaves and resolves the cruciform DNA. This chain is Holliday junction branch migration complex subunit RuvA, found in Streptococcus agalactiae serotype III (strain NEM316).